We begin with the raw amino-acid sequence, 309 residues long: Taste receptor type 2 member 31 (309 aa).

Residues 1 to 2 (MI) lie on the Extracellular side of the membrane. A helical transmembrane segment spans residues 3-23 (TFLPTIFSILVVVIFVIGNFG). Residues 24–55 (NGFIALVNSIEWVKRQKISFADQILTALAVSR) are Cytoplasmic-facing. A helical membrane pass occupies residues 56–76 (VGLLWALLLNWYSTVFNPAFY). Residues 77–100 (SVGVRTTVYDVWTVTGHFSNWLAT) lie on the Extracellular side of the membrane. Residues 101 to 121 (SLSIFYLLKIANFSNLIFLHL) form a helical membrane-spanning segment. At 122–126 (KRRVK) the chain is on the cytoplasmic side. Residues 127-147 (SVILVMLLGPLLFLACQLFVI) form a helical membrane-spanning segment. Over 148–181 (NMKEILRTKEYEGNMTWKIKLRSAMYLSDATITT) the chain is Extracellular. Asn-161 carries N-linked (GlcNAc...) asparagine glycosylation. Residues 182 to 202 (LANLVPFTLTLLSFLLLICSL) form a helical membrane-spanning segment. The Cytoplasmic portion of the chain corresponds to 203–229 (CKHLNKMQLHGKGSQDPSTKVHIKVLQ). Residues 230–250 (TVISFLLLCAIYFLSIMISVW) form a helical membrane-spanning segment. The Extracellular segment spans residues 251 to 259 (SFGSLENKP). A helical transmembrane segment spans residues 260-280 (VFMFCKAIRFSYPSIHPFILI). Residues 281–309 (WGNKKLKQTFLSVLRQVRYWVKGEKPSSP) lie on the Cytoplasmic side of the membrane.

The protein belongs to the G-protein coupled receptor T2R family.

The protein localises to the membrane. Functionally, receptor that may play a role in the perception of bitterness and is gustducin-linked. May play a role in sensing the chemical composition of the gastrointestinal content. The activity of this receptor may stimulate alpha gustducin, mediate PLC-beta-2 activation and lead to the gating of TRPM5. The sequence is that of Taste receptor type 2 member 31 (TAS2R31) from Pongo pygmaeus (Bornean orangutan).